We begin with the raw amino-acid sequence, 584 residues long: MAKQLSFSNESRDALEKGVNFVANAVKVTIGPKAKNVVIERKFGSPDVVRDGSTVAKEIEIENPISNLGAKLIEQVASKTKESAGDGTTTATILTQKMVQEGLKNIASGASPMELKKGMEVGLAFVLEKLSSKSISLSGSDIQKVATVSAGGDQEIGSIISKAMDIVTSDGVITVEESQSLDTELDITEGMSFDRGYSSPYFVTDQERQVCELENPKILITDQKISTLANLVPILEEIQKSGSPFLILAEDIEGEALTTLVLNKNSGVLNVASVRAPLFGERRKAALEDIAILTGAKLISEDKSMTLDQVSINDLGKAKKITITKDKTTIVAFEDTKDLVKARVEKLKREVEMTESEYDQDKINERIAKLAGGVALIKVGAATETEMKYKKLRIEDSLNATKAAIEEGVVSGGGQTLIEISDELLNLSQKSSDDLRTGINIVKEALLEPTKQIAKNAGFNGDVVVAEIKRLNKGFNANSGKYENLKESGILDPTKVIRLALQDSVSIAAMLLTTEVAIADIPEPEAAAPGGPGGDPMGGMGGMGGMGMPGMGGMGMPGMGGMGMPGMGGMGMPGMGGMGMPGMM.

ATP-binding positions include 29–32, 86–90, Gly413, and Asp492; these read TIGP and DGTTT. A disordered region spans residues 523-542; that stretch reads EPEAAAPGGPGGDPMGGMGG. Residues 530 to 542 show a composition bias toward gly residues; the sequence is GGPGGDPMGGMGG.

It belongs to the chaperonin (HSP60) family. As to quaternary structure, forms a cylinder of 14 subunits composed of two heptameric rings stacked back-to-back. Interacts with the co-chaperonin GroES.

It is found in the cytoplasm. The enzyme catalyses ATP + H2O + a folded polypeptide = ADP + phosphate + an unfolded polypeptide.. In terms of biological role, together with its co-chaperonin GroES, plays an essential role in assisting protein folding. The GroEL-GroES system forms a nano-cage that allows encapsulation of the non-native substrate proteins and provides a physical environment optimized to promote and accelerate protein folding. In Prochlorococcus marinus (strain MIT 9312), this protein is Chaperonin GroEL 1.